Reading from the N-terminus, the 272-residue chain is Imidazole glycerol phosphate synthase subunit HisF (272 aa).

Residues Asp11 and Asp130 contribute to the active site.

The protein belongs to the HisA/HisF family. Heterodimer of HisH and HisF.

Its subcellular location is the cytoplasm. The catalysed reaction is 5-[(5-phospho-1-deoxy-D-ribulos-1-ylimino)methylamino]-1-(5-phospho-beta-D-ribosyl)imidazole-4-carboxamide + L-glutamine = D-erythro-1-(imidazol-4-yl)glycerol 3-phosphate + 5-amino-1-(5-phospho-beta-D-ribosyl)imidazole-4-carboxamide + L-glutamate + H(+). The protein operates within amino-acid biosynthesis; L-histidine biosynthesis; L-histidine from 5-phospho-alpha-D-ribose 1-diphosphate: step 5/9. In terms of biological role, IGPS catalyzes the conversion of PRFAR and glutamine to IGP, AICAR and glutamate. The HisF subunit catalyzes the cyclization activity that produces IGP and AICAR from PRFAR using the ammonia provided by the HisH subunit. The protein is Imidazole glycerol phosphate synthase subunit HisF of Methanococcus vannielii (strain ATCC 35089 / DSM 1224 / JCM 13029 / OCM 148 / SB).